The primary structure comprises 502 residues: Activin receptor type-1-like (502 aa).

An N-terminal signal peptide occupies residues 1–22; it reads MTLGSFRRGLLMLSVAFGLTRG. Residues 23-119 are Extracellular-facing; sequence DLAKPSKLVN…EEPEVDAHLP (97 aa). An N-linked (GlcNAc...) asparagine glycan is attached at Asn-32. Intrachain disulfides connect Cys-33-Cys-50, Cys-35-Cys-40, and Cys-45-Cys-68. Residues 72 to 75 form a mediates specificity for BMP ligand region; it reads NQEL. 2 cysteine pairs are disulfide-bonded: Cys-76/Cys-88 and Cys-89/Cys-94. N-linked (GlcNAc...) asparagine glycosylation occurs at Asn-97. A helical membrane pass occupies residues 120-140; sequence LILGPVLALPVLVALGALGLW. At 141–502 the chain is on the cytoplasmic side; sequence RVRRRQEKQR…HNPEKPKVIH (362 aa). A phosphoserine mark is found at Ser-154, Ser-159, and Ser-160. Residues 171-200 enclose the GS domain; it reads SMLGDFLDSDCTTGSGSGLPFLVQRTVARQ. One can recognise a Protein kinase domain in the interval 201–502; the sequence is VALVECVGKG…HNPEKPKVIH (302 aa). Residues 207-215 and Lys-228 each bind ATP; that span reads VGKGRYGEV. Residue Asp-329 is the Proton acceptor of the active site.

This sequence belongs to the protein kinase superfamily. TKL Ser/Thr protein kinase family. TGFB receptor subfamily. Interacts with TSC22D1/TSC-22. Mg(2+) is required as a cofactor. Requires Mn(2+) as cofactor.

It localises to the cell membrane. It catalyses the reaction L-threonyl-[receptor-protein] + ATP = O-phospho-L-threonyl-[receptor-protein] + ADP + H(+). It carries out the reaction L-seryl-[receptor-protein] + ATP = O-phospho-L-seryl-[receptor-protein] + ADP + H(+). Its function is as follows. Type I receptor for TGF-beta family ligands BMP9/GDF2 and BMP10 and important regulator of normal blood vessel development. On ligand binding, forms a receptor complex consisting of two type II and two type I transmembrane serine/threonine kinases. Type II receptors phosphorylate and activate type I receptors which autophosphorylate, then bind and activate SMAD transcriptional regulators. May bind activin as well. The chain is Activin receptor type-1-like (Acvrl1) from Mus musculus (Mouse).